The chain runs to 417 residues: NADH-quinone oxidoreductase subunit D (417 aa).

It belongs to the complex I 49 kDa subunit family. As to quaternary structure, NDH-1 is composed of 14 different subunits. Subunits NuoB, C, D, E, F, and G constitute the peripheral sector of the complex.

The protein localises to the cell inner membrane. It catalyses the reaction a quinone + NADH + 5 H(+)(in) = a quinol + NAD(+) + 4 H(+)(out). NDH-1 shuttles electrons from NADH, via FMN and iron-sulfur (Fe-S) centers, to quinones in the respiratory chain. The immediate electron acceptor for the enzyme in this species is believed to be ubiquinone. Couples the redox reaction to proton translocation (for every two electrons transferred, four hydrogen ions are translocated across the cytoplasmic membrane), and thus conserves the redox energy in a proton gradient. The polypeptide is NADH-quinone oxidoreductase subunit D (Coxiella burnetii (strain CbuG_Q212) (Coxiella burnetii (strain Q212))).